The following is a 179-amino-acid chain: Inosine/xanthosine triphosphatase (179 aa).

8-13 serves as a coordination point for substrate; that stretch reads TTNPAK. Positions 38 and 68 each coordinate Mg(2+). 68-69 contributes to the substrate binding site; it reads EA.

The protein belongs to the YjjX NTPase family. As to quaternary structure, homodimer. Requires Mg(2+) as cofactor. Mn(2+) serves as cofactor.

It carries out the reaction XTP + H2O = XDP + phosphate + H(+). It catalyses the reaction ITP + H2O = IDP + phosphate + H(+). Phosphatase that hydrolyzes non-canonical purine nucleotides such as XTP and ITP to their respective diphosphate derivatives. Probably excludes non-canonical purines from DNA/RNA precursor pool, thus preventing their incorporation into DNA/RNA and avoiding chromosomal lesions. The protein is Inosine/xanthosine triphosphatase of Pectobacterium carotovorum subsp. carotovorum (strain PC1).